The chain runs to 328 residues: Olfactory receptor 13A1 (328 aa).

Topologically, residues 1–43 (MKLWMESHLIVPETRPSPRMMSNQTLVTEFILQGFSEHPEYRV) are extracellular. Residue asparagine 23 is glycosylated (N-linked (GlcNAc...) asparagine). A helical membrane pass occupies residues 44–64 (FLFSCFLFLYSGALTGNVLIT). Residues 65–72 (LAITFNPG) lie on the Cytoplasmic side of the membrane. The helical transmembrane segment at 73-93 (LHAPMYFFLLNLATMDIICTS) threads the bilayer. Over 94-117 (SIMPKALASLVSEESSISYGGCMA) the chain is Extracellular. Cysteine 115 and cysteine 207 are oxidised to a cystine. A helical membrane pass occupies residues 118–138 (QLYFLTWAASSELLLLTVMAY). Residues 139 to 157 (DRYAAICHPLHYSSMMSKV) are Cytoplasmic-facing. A helical membrane pass occupies residues 158–178 (FCSGLATAVWLLCAVNTAIHT). At 179–215 (GLMLRLDFCGPNVIIHFFCEVPPLLLLSCSSTYVNGV) the chain is on the extracellular side. A helical membrane pass occupies residues 216–235 (MIVLADAFYGIVNFLMTIAS). Residues 236–255 (YGFIVSSILKVKTAWGRQKA) are Cytoplasmic-facing. The chain crosses the membrane as a helical span at residues 256 to 276 (FSTCSSHLTVVCMYYTAVFYA). The Extracellular portion of the chain corresponds to 277-289 (YISPVSGYSAGKS). Residues 290–310 (KLAGLLYTVLSPTLNPLIYTL) form a helical membrane-spanning segment. At 311-328 (RNKEVKAALRKLFPFFRN) the chain is on the cytoplasmic side.

It belongs to the G-protein coupled receptor 1 family.

The protein localises to the cell membrane. Functionally, odorant receptor. This Homo sapiens (Human) protein is Olfactory receptor 13A1 (OR13A1).